The primary structure comprises 455 residues: uncharacterized protein (455 aa).

Residues Met-1–Ser-20 show a composition bias toward low complexity. 2 disordered regions span residues Met-1–Thr-234 and Arg-258–Lys-304. Basic and acidic residues-rich tracts occupy residues Glu-35–Gln-46, Ser-61–Ser-75, Arg-129–Asp-143, Arg-156–Arg-166, and Pro-173–Gly-186. The segment covering Ser-213–Arg-224 has biased composition (polar residues). Positions Ala-260 to Ala-271 are enriched in low complexity.

This is an uncharacterized protein from Arabidopsis thaliana (Mouse-ear cress).